The primary structure comprises 328 residues: MRQPHIAALLLLPLLLRSGTEGARTLRACGHPKMFNRMVGGENALEGEWPWQVSIQRNGIHFCGGSLIAPTWVLTAAHCFSNTSDISIYQVLLGALKLQQPGPHALYVPVKQVKSNPQYQGMASSADVALVELQGPVTFTNYILPVCLPDPSVIFESGMNCWVTGWGSPSEQDRLPNPRVLQKLAVPIIDTPKCNLLYNKDVESDFQLKTIKDDMLCAGFAEGKKDACKGDSGGPLVCLVDQSWVQAGVISWGEGCARRNRPGVYIRVTSHHKWIHQIIPELQFQGRAGTQQQQKDSQGQQRLAGNSAPCLAAHAMVLALGALLLRIV.

An N-terminal signal peptide occupies residues 1–22 (MRQPHIAALLLLPLLLRSGTEG). A propeptide spans 23 to 37 (ARTLRACGHPKMFNR) (activation peptide). In terms of domain architecture, Peptidase S1 spans 38 to 280 (MVGGENALEG…HHKWIHQIIP (243 aa)). Cysteine 63 and cysteine 79 are joined by a disulfide. The active-site Charge relay system is histidine 78. Asparagine 82 is a glycosylation site (N-linked (GlcNAc...) asparagine). Aspartate 127 functions as the Charge relay system in the catalytic mechanism. 3 disulfides stabilise this stretch: cysteine 161–cysteine 238, cysteine 194–cysteine 217, and cysteine 228–cysteine 256. Residue serine 232 is the Charge relay system of the active site.

It belongs to the peptidase S1 family.

The protein resides in the secreted. This Mus musculus (Mouse) protein is Serine protease 27 (Prss27).